Here is a 310-residue protein sequence, read N- to C-terminus: Prohibitin-2 (310 aa).

The helical; Signal-anchor for type II membrane protein transmembrane segment at F38 to L58 threads the bilayer. The interval D130–D144 is interaction with ATG8. The AIM motif lies at Y138–L141. A coiled-coil region spans residues N212–E253.

It belongs to the prohibitin family. In terms of assembly, the mitochondrial prohibitin complex consists of two subunits (PHB1 and PHB2). The subunits assemble into a membrane-associated ring-shaped supercomplex of approximately 1 mDa. The mitochondrial prohibitin complex interacts with the m-AAA protease, a heterohexamer composed of YTA12/RCA1 and YTA10/AFG3. The mitochondrial prohibitin complex interacts with ATG8 and the interaction may support mitophagosome assembly. The N-terminus is blocked.

The protein localises to the mitochondrion inner membrane. Prohibitin probably acts as a holdase/unfoldase for the stabilization of newly synthesized mitochondrial proteins. Involved in mitophagy; may act as an adapter for ATG8 that supports mitophagosome assembly. Negatively regulates the proteolytic processing of ATG32 via the i-AAA protease. Acts as a negative regulator of the m-AAA protease. In Saccharomyces cerevisiae (strain ATCC 204508 / S288c) (Baker's yeast), this protein is Prohibitin-2 (PHB2).